A 295-amino-acid chain; its full sequence is UDP-N-acetylenolpyruvoylglucosamine reductase (295 aa).

The FAD-binding PCMH-type domain occupies 24–188 (KVGGNAEIFF…LKAVFKINKG (165 aa)). The active site involves arginine 168. Serine 217 functions as the Proton donor in the catalytic mechanism. Residue glutamate 287 is part of the active site.

Belongs to the MurB family. Requires FAD as cofactor.

It localises to the cytoplasm. The catalysed reaction is UDP-N-acetyl-alpha-D-muramate + NADP(+) = UDP-N-acetyl-3-O-(1-carboxyvinyl)-alpha-D-glucosamine + NADPH + H(+). The protein operates within cell wall biogenesis; peptidoglycan biosynthesis. Its function is as follows. Cell wall formation. This Rickettsia massiliae (strain Mtu5) protein is UDP-N-acetylenolpyruvoylglucosamine reductase.